The primary structure comprises 378 residues: MGQSKKLNKQPSSLSPLVQLAGIRKCFDGKEVIPQLDLTINNGEFLTLLGPSGCGKTTVLRLIAGLETVDSGRIMLDNEDITHVPAENRYVNTVFQSYALFPHMTVFENVAFGLRMQKTPAAEITPRVMEALRMVQLETFAQRKPHQLSGGQQQRVAIARAVVNKPRLLLLDESLSALDYKLRKQMQNELKALQRKLGITFVFVTHDQEEALTMSDRIVVMRDGRIEQDGTPREIYEEPKNLFVAGFIGEINMFNATVIERLDEQRVRANVEGRECNIYVNFAVEPGQKLHVLLRPEDLRVEEINDDNHAEGLIGYVRERNYKGMTLESVVELENGKMVMVSEFFNEDDPDFDHSLDQKMAINWVESWEVVLADEEHK.

The ABC transporter domain maps to 18-248 (VQLAGIRKCF…PKNLFVAGFI (231 aa)). ATP is bound at residue 50 to 57 (GPSGCGKT).

It belongs to the ABC transporter superfamily. Spermidine/putrescine importer (TC 3.A.1.11.1) family. The complex is composed of two ATP-binding proteins (PotA), two transmembrane proteins (PotB and PotC) and a solute-binding protein (PotD).

It localises to the cell inner membrane. The enzyme catalyses ATP + H2O + polyamine-[polyamine-binding protein]Side 1 = ADP + phosphate + polyamineSide 2 + [polyamine-binding protein]Side 1.. In terms of biological role, part of the ABC transporter complex PotABCD involved in spermidine/putrescine import. Responsible for energy coupling to the transport system. This Shigella flexneri protein is Spermidine/putrescine import ATP-binding protein PotA.